The following is a 397-amino-acid chain: Phosphoglycerate kinase (397 aa).

Residues 21–23 (DFN), arginine 37, 60–63 (HLGR), arginine 119, and arginine 152 each bind substrate. Residues lysine 203, glycine 294, glutamate 325, and 354-357 (GGDS) each bind ATP.

This sequence belongs to the phosphoglycerate kinase family. In terms of assembly, monomer.

The protein resides in the cytoplasm. It catalyses the reaction (2R)-3-phosphoglycerate + ATP = (2R)-3-phospho-glyceroyl phosphate + ADP. It functions in the pathway carbohydrate degradation; glycolysis; pyruvate from D-glyceraldehyde 3-phosphate: step 2/5. In Pelodictyon phaeoclathratiforme (strain DSM 5477 / BU-1), this protein is Phosphoglycerate kinase.